Consider the following 247-residue polypeptide: MTGAVSAAYWIAAVAFLVGLGITAALYAKLGESEDRGRLAALAVIPGFAGLAYAGMALGIGTVTVNGAELVGLRYVDWIVTTPLLVGFIGYVAGASRRAIAGVMLADALMIAFGAGAVVTGGTLKWVLFGVSSIFHVTLFAYLYVVFPRAVPDDPMQRGLFSLLKNHVGLLWLAYPFVWLMGPAGIGFTTGVGAALTYAFLDVLAKVPYVYFFYARRQAFTDVVSAATADREDATDAVGDGAPTAAD.

Topologically, residues 1-4 are extracellular; it reads MTGA. The helical transmembrane segment at 5-26 threads the bilayer; that stretch reads VSAAYWIAAVAFLVGLGITAAL. Topologically, residues 27 to 35 are cytoplasmic; that stretch reads YAKLGESED. The helical transmembrane segment at 36-57 threads the bilayer; it reads RGRLAALAVIPGFAGLAYAGMA. Over 58–71 the chain is Extracellular; the sequence is LGIGTVTVNGAELV. The helical transmembrane segment at 72–93 threads the bilayer; that stretch reads GLRYVDWIVTTPLLVGFIGYVA. Topologically, residues 94-96 are cytoplasmic; sequence GAS. The chain crosses the membrane as a helical span at residues 97–119; the sequence is RRAIAGVMLADALMIAFGAGAVV. At 120-123 the chain is on the extracellular side; sequence TGGT. The helical transmembrane segment at 124-151 threads the bilayer; it reads LKWVLFGVSSIFHVTLFAYLYVVFPRAV. Residues 152 to 154 lie on the Cytoplasmic side of the membrane; that stretch reads PDD. The chain crosses the membrane as a helical span at residues 155-182; it reads PMQRGLFSLLKNHVGLLWLAYPFVWLMG. Residues 183-190 lie on the Extracellular side of the membrane; the sequence is PAGIGFTT. Residues 191-223 form a helical membrane-spanning segment; that stretch reads GVGAALTYAFLDVLAKVPYVYFFYARRQAFTDV. The residue at position 206 (Lys-206) is an N6-(retinylidene)lysine. The Cytoplasmic segment spans residues 224–247; the sequence is VSAATADREDATDAVGDGAPTAAD.

Belongs to the archaeal/bacterial/fungal opsin family. In terms of assembly, interacts with HTR-I.

The protein localises to the cell membrane. Functionally, involved in the control of phototaxis. Mediates both photoattractant (in the orange light) and photophobic (in the near UV light) responses. The signal is then transmitted to the sensory rhodopsin I transducer (HTR-I). The chain is Sensory rhodopsin-1 (sop1) from Halobacterium sp. (strain SG1).